The chain runs to 500 residues: FAD-linked oxidoreductase easE (500 aa).

One can recognise an FAD-binding PCMH-type domain in the interval 37–220; that stretch reads QGRIPLFTVG…TRATMRVFPD (184 aa).

Belongs to the oxygen-dependent FAD-linked oxidoreductase family. Requires FAD as cofactor.

The protein operates within alkaloid biosynthesis; ergot alkaloid biosynthesis. Functionally, FAD-linked oxidoreductase; part of the gene cluster that mediates the biosynthesis of fungal ergot alkaloid. DmaW catalyzes the first step of ergot alkaloid biosynthesis by condensing dimethylallyl diphosphate (DMAP) and tryptophan to form 4-dimethylallyl-L-tryptophan. The second step is catalyzed by the methyltransferase easF that methylates 4-dimethylallyl-L-tryptophan in the presence of S-adenosyl-L-methionine, resulting in the formation of 4-dimethylallyl-L-abrine. The catalase easC and the FAD-dependent oxidoreductase easE then transform 4-dimethylallyl-L-abrine to chanoclavine-I which is further oxidized by easD in the presence of NAD(+), resulting in the formation of chanoclavine-I aldehyde. Chanoclavine-I aldehyde is the precursor of ergoamides and ergopeptines in Clavicipitaceae, and clavine-type alcaloids such as fumiclavine in Trichocomaceae. However, the metabolites downstream of chanoclavine-I aldehyde in Arthrodermataceae have not been identified yet. The protein is FAD-linked oxidoreductase easE of Arthroderma benhamiae (strain ATCC MYA-4681 / CBS 112371) (Trichophyton mentagrophytes).